A 317-amino-acid chain; its full sequence is DNA-directed RNA polymerase subunit alpha 2 (317 aa).

The alpha N-terminal domain (alpha-NTD) stretch occupies residues Met1 to Glu227. The segment at Ile241–Leu317 is alpha C-terminal domain (alpha-CTD).

The protein belongs to the RNA polymerase alpha chain family. As to quaternary structure, homodimer. The RNAP catalytic core consists of 2 alpha, 1 beta, 1 beta' and 1 omega subunit. When a sigma factor is associated with the core the holoenzyme is formed, which can initiate transcription.

It carries out the reaction RNA(n) + a ribonucleoside 5'-triphosphate = RNA(n+1) + diphosphate. In terms of biological role, DNA-dependent RNA polymerase catalyzes the transcription of DNA into RNA using the four ribonucleoside triphosphates as substrates. In Francisella tularensis subsp. holarctica (strain FTNF002-00 / FTA), this protein is DNA-directed RNA polymerase subunit alpha 2.